A 257-amino-acid polypeptide reads, in one-letter code: Zinc transporter ZupT (257 aa).

3 helical membrane passes run 5 to 25 (LILT…GVLG), 32 to 52 (LLAF…LMEM), and 61 to 81 (GMSP…YFGL). Asn120 and Glu123 together coordinate Fe(2+). Residues Glu123 and His148 each coordinate Zn(2+). 4 consecutive transmembrane segments (helical) span residues 137 to 157 (LGFG…LAVA), 171 to 191 (ILWA…AWLI), 195 to 215 (MISP…MVAL), and 236 to 256 (GVLC…TVGI). Residues Asn149, Glu152, and Glu181 each contribute to the Fe(2+) site. A Zn(2+)-binding site is contributed by Glu152.

Belongs to the ZIP transporter (TC 2.A.5) family. ZupT subfamily.

It is found in the cell inner membrane. It carries out the reaction Zn(2+)(in) = Zn(2+)(out). In terms of biological role, mediates zinc uptake. May also transport other divalent cations. This chain is Zinc transporter ZupT, found in Escherichia coli O81 (strain ED1a).